The primary structure comprises 231 residues: Phosphoglycolate phosphatase (231 aa).

The Nucleophile role is filled by Asp-9. 2 residues coordinate Mg(2+): Asp-9 and Asp-11. Lys-154 contacts substrate. Positions 177 and 181 each coordinate Mg(2+).

The protein belongs to the archaeal SPP-like hydrolase family. Mg(2+) is required as a cofactor.

It catalyses the reaction 2-phosphoglycolate + H2O = glycolate + phosphate. Catalyzes the dephosphorylation of 2-phosphoglycolate. The sequence is that of Phosphoglycolate phosphatase from Nitrosopumilus maritimus (strain SCM1).